We begin with the raw amino-acid sequence, 144 residues long: DNA-directed RNA polymerases II and V subunit 6B (144 aa).

A compositionally biased stretch (acidic residues) spans 1–32 (MADDDYNEVDDLGYEDEPAEPEIEEGVEEDAD). A disordered region spans residues 1-62 (MADDDYNEVD…EPVQRPRKTS (62 aa)). A compositionally biased stretch (basic and acidic residues) spans 46 to 56 (TEDKVETEPVQ).

Belongs to the archaeal Rpo6/eukaryotic RPB6 RNA polymerase subunit family. In terms of assembly, component of the RNA polymerase II and V complexes.

It is found in the nucleus. In terms of biological role, DNA-dependent RNA polymerase catalyzes the transcription of DNA into RNA using the four ribonucleoside triphosphates as substrates. Component of RNA polymerase II which synthesizes mRNA precursors and many functional non-coding RNAs. Pol II is the central component of the basal RNA polymerase II transcription machinery. It is composed of mobile elements that move relative to each other. Component of RNA polymerase V which mediates RNA-directed DNA methylation-dependent (RdDM) transcriptional gene silencing (TGS) of endogenous repeated sequences, including transposable elements. The polypeptide is DNA-directed RNA polymerases II and V subunit 6B (NRPB6B) (Arabidopsis thaliana (Mouse-ear cress)).